We begin with the raw amino-acid sequence, 1020 residues long: Phosphatidylinositol 3-kinase VPS34 (1020 aa).

Positions 49–210 (LSTKFEDPTV…NWLDKMVLPK (162 aa)) constitute a C2 PI3K-type domain. Positions 331–577 (DKELKPTPQL…DGPIKIYMDI (247 aa)) constitute a PIK helical domain. A PI3K/PI4K catalytic domain is found at 666-1004 (YPEESSVFKS…LINDSVNAFL (339 aa)). The tract at residues 672–678 (VFKSSLA) is G-loop. Residues 873–881 (GVGDRHLDN) form a catalytic loop region. The tract at residues 892-913 (HADFGYILGRDPKPFPPLMKLP) is activation loop.

Belongs to the PI3/PI4-kinase family. As to quaternary structure, component of the autophagy-specific VPS34 PI3-kinase complex I composed of at least VPS15, VPS30, VPS34, and of the VPS34 PI3-kinase complex II composed of VPS15, VPS30, VPS34 and VPS38. Interacts with VMNA7. In terms of processing, autophosphorylated.

It is found in the golgi apparatus. The protein resides in the trans-Golgi network membrane. Its subcellular location is the endosome membrane. The catalysed reaction is a 1,2-diacyl-sn-glycero-3-phospho-(1D-myo-inositol) + ATP = a 1,2-diacyl-sn-glycero-3-phospho-(1D-myo-inositol-3-phosphate) + ADP + H(+). In terms of biological role, multifunctional phosphatidylinositol 3-kinase involved in acidification of vacuoles, pH-dependent cell growth, and autophagocytosis. Plays an important role in protein transport and virulence. Component of the autophagy-specific VPS34 PI3-kinase complex I essential to recruit the ATG8-phosphatidylinositol conjugate and the ATG12-ATG5 conjugate to the pre-autophagosomal structure. Also involved in endosome-to-Golgi retrograde transport as part of the VPS34 PI3-kinase complex II. This second complex is required for the endosome-to-Golgi retrieval of PEP1 and KEX2, and the recruitment of VPS5 and VPS7, two components of the retromer complex, to endosomal membranes (probably through the synthesis of a specific pool of phosphatidylinositol 3-phosphate recruiting the retromer to the endosomes). Finally, it might also be involved in ethanol tolerance and cell wall integrity. The polypeptide is Phosphatidylinositol 3-kinase VPS34 (Candida albicans (strain SC5314 / ATCC MYA-2876) (Yeast)).